We begin with the raw amino-acid sequence, 307 residues long: Streptomycin 6-kinase (307 aa).

Streptomycin is bound at residue Leu-133–Ala-145. The active-site Proton acceptor is the Asp-201.

Belongs to the aminoglycoside phosphotransferase family.

The enzyme catalyses streptomycin + ATP = streptomycin 6-phosphate + ADP + H(+). Its function is as follows. The aminoglycoside phosphotransferases achieve inactivation of their antibiotic substrates by phosphorylation. The polypeptide is Streptomycin 6-kinase (aphD) (Streptomyces griseus).